A 188-amino-acid chain; its full sequence is Deoxycytidylate deaminase (188 aa).

A CMP/dCMP-type deaminase domain is found at 1–171 (MKASTVLQIA…DILRNAGIEV (171 aa)). Positions 19, 49, 94, 102, and 104 each coordinate Zn(2+). The active-site Proton donor is E106. Positions 132 and 135 each coordinate Zn(2+).

This sequence belongs to the cytidine and deoxycytidylate deaminase family. Homohexamer. Zn(2+) is required as a cofactor.

The catalysed reaction is dCMP + H2O + H(+) = dUMP + NH4(+). With respect to regulation, allosteric enzyme whose activity is greatly influenced by the end products of its metabolic pathway, dCTP and dTTP. Supplies the nucleotide substrate for thymidylate synthetase. This is Deoxycytidylate deaminase (CD) from Enterobacteria phage T2 (Bacteriophage T2).